A 194-amino-acid chain; its full sequence is Serine/threonine-protein kinase mos (194 aa).

Positions leucine 47 to phenylalanine 194 constitute a Protein kinase domain. ATP is bound by residues leucine 53–valine 61 and lysine 74. The active-site Proton acceptor is aspartate 187.

Belongs to the protein kinase superfamily. Ser/Thr protein kinase family.

The enzyme catalyses L-seryl-[protein] + ATP = O-phospho-L-seryl-[protein] + ADP + H(+). The catalysed reaction is L-threonyl-[protein] + ATP = O-phospho-L-threonyl-[protein] + ADP + H(+). The sequence is that of Serine/threonine-protein kinase mos (MOS) from Atheris squamigera (Variable bush viper).